The following is a 382-amino-acid chain: Aminotransferase FGSG_00049 (382 aa).

Arg80 is a binding site for pyridoxal 5'-phosphate. Residue Lys181 is modified to N6-(pyridoxal phosphate)lysine. Glu217 is a binding site for pyridoxal 5'-phosphate.

This sequence belongs to the class-IV pyridoxal-phosphate-dependent aminotransferase family. Pyridoxal 5'-phosphate is required as a cofactor.

It functions in the pathway mycotoxin biosynthesis. In terms of biological role, aminotransferase; part of the gene cluster that mediates the biosynthesis of gramillins A and B, bicyclic lipopeptides that induce cell death in maize leaves but not in wheat leaves. The nonribosomal peptide synthetase GRA1 incorporates respectively a glutamic adic (Glu), a leucine (Leu), a serine (Ser), a hydroxyglutamine (HOGln), a 2-amino decanoic acid, and 2 cysteins (CysB and CysA). The biosynthesis of 2-amino decanoic acid incorporated in gramillins could be initiated by a fatty acid synthase composed of the alpha and beta subunits FGSG_00036 and FGSG_11656. The cytochrome P450 monooxygenase FGSG_15680 could hydroxylate the fatty acid chain. Subsequent oxidation to the ketone by the oxidoreductase FGSG_00048 and transamination by aminotransferase FGSG_00049 could form 2-amino-decanoic acid. On the other hand, FGSG_15680 could also be responsible for the HO-modified glutamine at the gamma-position. Whether hydroxylation occurs on the fully assembled product or on the Gln residue prior to assembly into the gramillins requires further proof. The thioredoxin FGSG_00043 could also be required for the disulfide-bond formation between CysA and CysB. The specific involvement of the remaining proteins from the cluster is more difficult to discern, but could have broader regulatory (FGSG_00040 and FGSG_11657) or enzymatic functions (FGSG_00044 and FGSG_00045). The final C-domain of GRA1 does not possess the expected sequence of a termination CT domain, often implicated in macrocyclization and release of a cyclopeptidein fungal NRPs; and the thioesterase FGSG_00047 may act in concert with the terminal C-domain of GRA1 to catalyze the formation of the macrocyclic anhydride and release of the products. In Gibberella zeae (strain ATCC MYA-4620 / CBS 123657 / FGSC 9075 / NRRL 31084 / PH-1) (Wheat head blight fungus), this protein is Aminotransferase FGSG_00049.